Consider the following 172-residue polypeptide: MNTDAIESMVRDVLSRMNSLQGESATPVAASSSAHTAKVTDYPLANKHPEWVKTATNKTLDDFTLENVLSNKVTAQDMRITPETLRLQAEIAKDAGRDRLAMNFERAAELTAVPDDRILEIYNALRPYRSTKDELMAIADDLENRYQAKICAAFVREAAALYVERKKLKGDD.

Belongs to the diol/glycerol dehydratase small subunit family. As to quaternary structure, the propanediol dehydratase enzyme is a heterotrimeric complex composed of a large (PduC), a medium (PduD) and a small (PduE) subunit. It depends on adenosylcob(III)alamin as a cofactor.

The protein resides in the bacterial microcompartment. It catalyses the reaction propane-1,2-diol = propanal + H2O. Its pathway is polyol metabolism; 1,2-propanediol degradation. Functionally, part of the PduCDE complex that catalyzes the dehydration of 1,2-propanediol (1,2-PD) to propionaldehyde. Localized in the bacterial microcompartment (BMC) dedicated to 1,2-PD degradation. Its function is as follows. Expression of a cosmid containing the full 21-gene pdu operon in E.coli allows E.coli to grow on 1,2-propanediol (1,2-PD) with the appearance of BMCs in its cytoplasm. The 1,2-PD-specific bacterial microcompartment (BMC) concentrates low levels of 1,2-PD catabolic enzymes, concentrates volatile reaction intermediates thus enhancing pathway flux and keeps the level of toxic, mutagenic propionaldehyde low. The polypeptide is Propanediol dehydratase small subunit (Citrobacter freundii).